The sequence spans 426 residues: MSEMAASSAISLLDIKLRRFGVGASNHELRLTKWFKGDQAGAPTRRFTCFADMLAPIRRSEKSEERRFDQKMSAHGAGIKTSSSAVPFASPKSRFLSKQEKFYPRCTPRLTGPQSRDTPPKRDTGIANEKDWGIDLLNENVNEAGTNEDGSSWFRESGHDLGDNGYRCRWSRMGGRSHDGSSEWTETWWEKSDWTGYKELGVEKSGKNSEGDSWWETWQEVLHQDEWSNLARIERSAQKQAKSGTENAGWYEKWWEKYDAKGWTEKGAHKYGRLNEQSWWEKWGEHYDGRGSVLKWTDKWAETELGTKWGDKWEEKFFSGIGSRQGETWHVSPNSDRWSRTWGEEHFGNGKVHKYGKSTTGESWDIVVDEETYYEAEPHYGWADVVGDSTQLLSIQPRERPPGVYPNLEFGPSPPPEPDLPPDQPQ.

Residues 1–58 (MSEMAASSAISLLDIKLRRFGVGASNHELRLTKWFKGDQAGAPTRRFTCFADMLAPIR) constitute a chloroplast transit peptide. Disordered stretches follow at residues 106–127 (CTPRLTGPQSRDTPPKRDTGIA) and 396–426 (QPRERPPGVYPNLEFGPSPPPEPDLPPDQPQ). Residues 118–127 (TPPKRDTGIA) show a composition bias toward basic and acidic residues. The span at 412 to 426 (PSPPPEPDLPPDQPQ) shows a compositional bias: pro residues.

The protein belongs to the ESV1 family.

The protein localises to the plastid. It localises to the chloroplast stroma. Its subcellular location is the plastid stroma. Functionally, binds preferentially to highly ordered alpha-glucans, such as starch and crystalline maltodextrins. Involved in the organization of the starch granule matrix, thus influencing starch turnover by modulating the accessibility of starch polymers to modifying and degrading enzymes involved in phosphorylation, hydrolyzes and synthesis, including starch synthases (SSI and SSIII), starch phosphorylases (PHS1), isoamylase, beta-amylase, glucan water dikinase (GWD) and phosphoglucan water dikinase (PWD). Prevents GWD- and PWD-mediated starch phosphorylation, and subsequent degradation. Required for the control of starch degradation in leaves and starch distribution in nonphotosynthetic parts (e.g. cells immediately adjacent to veins, columella cells of root caps, stems, flowers and siliques) by limiting the hasty depletion of starch reserves during the night. Promotes gravitropic responses, negative in shoots but positive in roots, by maintaining starch granules (statoliths) accumulation in hypocotyls and roots columella, especially in dark conditions and in the endodermis, where starch is formed from transported glucose-6-phosphates. The sequence is that of Protein EARLY STARVATION 1, chloroplastic from Arabidopsis thaliana (Mouse-ear cress).